The following is a 129-amino-acid chain: Glycoprotein hormone alpha-2 (129 aa).

The first 23 residues, 1–23, serve as a signal peptide directing secretion; it reads MPMASPQTLVLYLLVLAVTEAWG. 4 disulfides stabilise this stretch: Cys-31/Cys-89, Cys-48/Cys-103, Cys-57/Cys-119, and Cys-61/Cys-121. N-linked (GlcNAc...) asparagine glycans are attached at residues Asn-37 and Asn-81.

Belongs to the glycoprotein hormones subunit alpha family. As to quaternary structure, heterodimer with GPHB5; this heterodimer interacts with thyroid-stimulating hormone receptor (TSHR), and hence stimulates cAMP production. Post-translationally, glycosylated. In terms of tissue distribution, found in a variety of tissues.

Its subcellular location is the secreted. In terms of biological role, functions as a heterodimeric glycoprotein hormone with GPHB5 able to bind and activate the thyroid-stimulating hormone receptor (TSHR), leading to increased cAMP production. Plays a central role in controlling thyroid cell metabolism. The sequence is that of Glycoprotein hormone alpha-2 (GPHA2) from Homo sapiens (Human).